Here is a 295-residue protein sequence, read N- to C-terminus: Nitrogenase iron protein (295 aa).

11 to 18 contributes to the ATP binding site; the sequence is GKGGIGKS. Residue Cys-99 participates in [4Fe-4S] cluster binding. The residue at position 102 (Arg-102) is an ADP-ribosylarginine; by dinitrogenase reductase ADP-ribosyltransferase. Cys-133 is a [4Fe-4S] cluster binding site.

It belongs to the NifH/BchL/ChlL family. In terms of assembly, homodimer. It depends on [4Fe-4S] cluster as a cofactor. Post-translationally, the reversible ADP-ribosylation of Arg-102 inactivates the nitrogenase reductase and regulates nitrogenase activity.

It catalyses the reaction N2 + 8 reduced [2Fe-2S]-[ferredoxin] + 16 ATP + 16 H2O = H2 + 8 oxidized [2Fe-2S]-[ferredoxin] + 2 NH4(+) + 16 ADP + 16 phosphate + 6 H(+). Its function is as follows. The key enzymatic reactions in nitrogen fixation are catalyzed by the nitrogenase complex, which has 2 components: the iron protein and the molybdenum-iron protein. This Zymomonas mobilis subsp. mobilis (strain ATCC 31821 / ZM4 / CP4) protein is Nitrogenase iron protein.